Reading from the N-terminus, the 175-residue chain is Adenine phosphoribosyltransferase (175 aa).

Belongs to the purine/pyrimidine phosphoribosyltransferase family. As to quaternary structure, homodimer.

The protein localises to the cytoplasm. It carries out the reaction AMP + diphosphate = 5-phospho-alpha-D-ribose 1-diphosphate + adenine. It participates in purine metabolism; AMP biosynthesis via salvage pathway; AMP from adenine: step 1/1. In terms of biological role, catalyzes a salvage reaction resulting in the formation of AMP, that is energically less costly than de novo synthesis. This is Adenine phosphoribosyltransferase from Lacticaseibacillus paracasei (strain ATCC 334 / BCRC 17002 / CCUG 31169 / CIP 107868 / KCTC 3260 / NRRL B-441) (Lactobacillus paracasei).